The chain runs to 63 residues: Bucandin (63 aa).

5 cysteine pairs are disulfide-bonded: Cys3–Cys24, Cys6–Cys11, Cys17–Cys39, Cys43–Cys55, and Cys56–Cys61.

As to expression, expressed by the venom gland.

It is found in the secreted. Its function is as follows. This toxin is described as enhancing presynaptic acetylcholine release, but neither experimental results, nor references to other sources are available. In Bungarus candidus (Malayan krait), this protein is Bucandin.